The following is a 360-amino-acid chain: DNA polymerase IV (360 aa).

Residues 6 to 187 (IIHVDMDAFY…LKIGDLHGVG (182 aa)) form the UmuC domain. Mg(2+) is bound by residues D10 and D105. E106 is an active-site residue.

Belongs to the DNA polymerase type-Y family. In terms of assembly, monomer. Requires Mg(2+) as cofactor.

It localises to the cytoplasm. The catalysed reaction is DNA(n) + a 2'-deoxyribonucleoside 5'-triphosphate = DNA(n+1) + diphosphate. Its function is as follows. Poorly processive, error-prone DNA polymerase involved in untargeted mutagenesis. Copies undamaged DNA at stalled replication forks, which arise in vivo from mismatched or misaligned primer ends. These misaligned primers can be extended by PolIV. Exhibits no 3'-5' exonuclease (proofreading) activity. May be involved in translesional synthesis, in conjunction with the beta clamp from PolIII. This chain is DNA polymerase IV, found in Exiguobacterium sibiricum (strain DSM 17290 / CCUG 55495 / CIP 109462 / JCM 13490 / 255-15).